Reading from the N-terminus, the 666-residue chain is ATP-dependent RNA helicase MSS116, mitochondrial (666 aa).

Residues 1 to 22 (MLRHCSLGLVTTQISAIAPLRL) constitute a mitochondrion transit peptide. Residues 38–60 (RDRRSSRSREDKPYNSRTRRFDD) are compositionally biased toward basic and acidic residues. The tract at residues 38–131 (RDRRSSRSRE…KSYSKGGNTS (94 aa)) is disordered. Over residues 120 to 131 (NTKSYSKGGNTS) the composition is skewed to polar residues. Residues 159 to 187 (SLLEKNVISRDLYDSISRMGFEQLTPVQQ) carry the Q motif motif. The Helicase ATP-binding domain maps to 192-379 (PIITNSDSDI…NDIMNKEECL (188 aa)). 205 to 212 (AKTGTGKT) contributes to the ATP binding site. The DEAD box signature appears at 320-323 (DEAD). One can recognise a Helicase C-terminal domain in the interval 408–560 (NLYAAIEHIR…NIRKFEAQPH (153 aa)).

Belongs to the DEAD box helicase family. DDX18/HAS1 subfamily.

It is found in the mitochondrion matrix. The enzyme catalyses ATP + H2O = ADP + phosphate + H(+). ATP-dependent RNA helicase required for mitochondrial splicing of group I and II introns. Also required for efficient mitochondrial translation. This Candida glabrata (strain ATCC 2001 / BCRC 20586 / JCM 3761 / NBRC 0622 / NRRL Y-65 / CBS 138) (Yeast) protein is ATP-dependent RNA helicase MSS116, mitochondrial (MSS116).